The sequence spans 193 residues: Phosphoheptose isomerase (193 aa).

Residues 37 to 193 (LADSFKAGGK…QLIEKEMVKA (157 aa)) form the SIS domain. 52 to 54 (NGG) is a substrate binding site. Residues His-61 and Glu-65 each contribute to the Zn(2+) site. Substrate-binding positions include Glu-65, 93 to 94 (ND), 119 to 121 (STS), Ser-124, and Gln-172. Residues Gln-172 and His-180 each contribute to the Zn(2+) site.

The protein belongs to the SIS family. GmhA subfamily. In terms of assembly, homotetramer. Zn(2+) serves as cofactor.

The protein localises to the cytoplasm. It catalyses the reaction 2 D-sedoheptulose 7-phosphate = D-glycero-alpha-D-manno-heptose 7-phosphate + D-glycero-beta-D-manno-heptose 7-phosphate. It functions in the pathway carbohydrate biosynthesis; D-glycero-D-manno-heptose 7-phosphate biosynthesis; D-glycero-alpha-D-manno-heptose 7-phosphate and D-glycero-beta-D-manno-heptose 7-phosphate from sedoheptulose 7-phosphate: step 1/1. Functionally, catalyzes the isomerization of sedoheptulose 7-phosphate in D-glycero-D-manno-heptose 7-phosphate. The polypeptide is Phosphoheptose isomerase (Yersinia enterocolitica serotype O:8 / biotype 1B (strain NCTC 13174 / 8081)).